We begin with the raw amino-acid sequence, 132 residues long: Salivary cystatin-L2 (132 aa).

Positions 1-18 (MTSSLALVLVFGGAAVCA) are cleaved as a signal peptide. Positions 28 to 117 (ERSNQDDPEY…RTCTTVIYRN (90 aa)) constitute a Cystatin domain. A required for interaction with mouse ANXA2 region spans residues 87–131 (TCELTSTYNKDTCQANANAAQRTCTTVIYRNLQGEKSISSFECAA). Intrachain disulfides connect C88–C99 and C110–C129.

Belongs to the cystatin family. Monomer. Interacts (via loop 2) with mouse ANXA2; the interaction results in reduced activation of mouse NLRC4 inflammasome formation upon Anaplasma phagocytophilum infection. As to expression, detected in salivary gland and midgut.

It is found in the secreted. In terms of biological role, contributes to the suppression of the host's immune response to tick salivary proteins and is important for successful feeding on hosts. Inhibitor of cysteine proteinases. Inhibits host immune responses, probably via its inhibition of host cathepsins. Inhibits host papain (in vitro). Inhibits host cathepsin L (CTSL) (in vitro). Inhibits host cathepsin L2 (CTSV) (in vitro). Attenuates IFN-beta (IFNB1)-triggered JAK/STAT signaling pathway in mouse dendritic cells. Suppresses induction of interferon-stimulated gene IRF7 and production of CXCL10 in lipopolysaccharide (LPS)-activated dendritic cells. Its function is as follows. (Microbial infection) Down-regulates TLR2-mediated host responses to infection by Borrelia burgdorferi and the production of chemokines CCL3 and CXCL10 by host dendritic cells. Enhances infection by the tick-transmitted pathogen B.burgdorferi (in vitro). Functionally, (Microbial infection) Inhibits host inflammatory responses to Anaplasma phagocytophilum infection. Interacts with mouse ANXA2 and suppresses oligomerization of NLRC4, a key component of host inflammasomes that sense A.phagocytophilum infection. Indirectly targets caspase-1 (CASP1) activation and subsequent IL-1beta (IL1B) and IL18 release by inhibiting reactive oxygen species (ROS) production from NADPH oxidase complex in A.phagocytophilum-infected mouse macrophages. (Microbial infection) Promotes replication of tick-borne encephalitis virus in mouse dendritic cells and reduces anti-viral effect of host IFN-beta (IFNB1). The chain is Salivary cystatin-L2 from Ixodes scapularis (Black-legged tick).